We begin with the raw amino-acid sequence, 2581 residues long: Chromodomain-helicase-DNA-binding protein 8 (2581 aa).

Disordered regions lie at residues 22 to 114 (DDSF…QTST), 253 to 281 (VKGSAPAGNPGATGPPLKPAVTLTSTPAQ), and 349 to 375 (QKIQIVPQPPSSQPQPQPPPSAQPLTL). Polar residues-rich tracts occupy residues 42-64 (SLDSLDQMNQDGGSGDVGNSSAS) and 94-114 (DYTTQPTSQEQPAQPVLQTST). Residues 255–267 (GSAPAGNPGATGP) are compositionally biased toward low complexity. Residues 355 to 370 (PQPPSSQPQPQPPPSA) are compositionally biased toward pro residues. Phosphoserine is present on Ser432. Disordered regions lie at residues 473-584 (RARG…KRKK) and 596-616 (DEEEEEVDVTGPIKPEPILPE). A compositionally biased stretch (basic and acidic residues) spans 493-516 (RPEEEGEKKRRKKSSGERLKEEKP). Phosphoserine is present on residues Ser553 and Ser562. Residues 572–584 (QKRRSNRQVKRKK) are compositionally biased toward basic residues. Residue Lys609 forms a Glycyl lysine isopeptide (Lys-Gly) (interchain with G-Cter in SUMO) linkage. 2 consecutive Chromo domains span residues 642-709 (AIVD…AQMR) and 724-790 (VEVD…RVNR). The Helicase ATP-binding domain maps to 823–997 (LFNWYNRQNC…FSLLHFLEPS (175 aa)). Position 836–843 (836–843 (DEMGLGKT)) interacts with ATP. The short motif at 948–951 (DEAH) is the DEAH box element. One can recognise a Helicase C-terminal domain in the interval 1137–1288 (LIDKLLPKLK…KAVLQSMSGR (152 aa)). Phosphoserine is present on residues Ser1420 and Ser1424. The tract at residues 1692 to 1713 (EDPEYKPLQGPPKDPDDEGDPL) is disordered. The interval 1789 to 2302 (IARREKQQRW…LVELEVECME (514 aa)) is interaction with FAM124B. A phosphoserine mark is found at Ser1976 and Ser1978. Residues 1988-2016 (QCTSRTASPSPLRPDVPAEKSPEENAVQV) are disordered. Thr1993 bears the Phosphothreonine mark. Residues Ser1995, Ser1997, and Ser2008 each carry the phosphoserine modification. Lys2025 participates in a covalent cross-link: Glycyl lysine isopeptide (Lys-Gly) (interchain with G-Cter in SUMO2). Disordered stretches follow at residues 2047 to 2118 (SSDT…YDEE) and 2179 to 2221 (NRRS…SSSA). Acidic residues predominate over residues 2063–2072 (EDDDDSDSEL). Residues Ser2068 and Ser2070 each carry the phosphoserine modification. Over residues 2075–2094 (SKLSPSSSSSSSSSSSSSSS) the composition is skewed to low complexity. Residues 2102–2116 (EEKLTADRSRPKLYD) are compositionally biased toward basic and acidic residues. Residues Ser2182, Ser2200, and Ser2202 each carry the phosphoserine modification. Thr2204 carries the post-translational modification Phosphothreonine. Phosphoserine is present on Ser2211. Thr2215 carries the phosphothreonine modification. A Phosphoserine modification is found at Ser2223. A Glycyl lysine isopeptide (Lys-Gly) (interchain with G-Cter in SUMO2) cross-link involves residue Lys2256. The disordered stretch occupies residues 2484–2581 (PHVDSSTMLH…NSDSSDDADD (98 aa)). Residues 2492–2510 (LHHHHHHPHPHHHHHHHPG) are compositionally biased toward basic residues. The segment covering 2513–2528 (TTGYPSSPATTTSGTA) has biased composition (low complexity). Ser2519 is subject to Phosphoserine. Residues 2537–2550 (EDDDEEEDEDDDDL) are compositionally biased toward acidic residues. A compositionally biased stretch (low complexity) spans 2565 to 2574 (DDPMMPANSD).

The protein belongs to the SNF2/RAD54 helicase family. CHD8 subfamily. In terms of assembly, interacts with p53/TP53, histone H1 and CTCF. Component of some MLL1/MLL complex, at least composed of the core components KMT2A/MLL1, ASH2L, HCFC1/HCF1, WDR5 and RBBP5, as well as the facultative components BACC1, CHD8, E2F6, HSP70, INO80C, KANSL1, LAS1L, MAX, MCRS1, MGA, KAT8/MOF, PELP1, PHF20, PRP31, RING2, RUVB1/TIP49A, RUVB2/TIP49B, SENP3, TAF1, TAF4, TAF6, TAF7, TAF9 and TEX10. Interacts with CHD7. Interacts with FAM124B. Interacts with CTNNB1. Interacts with PIAS3. Interacts with TLK2. Interacts with HNRNPL in an RNA-dependent manner. In terms of processing, sumoylated.

The protein localises to the nucleus. It carries out the reaction ATP + H2O = ADP + phosphate + H(+). ATP-dependent chromatin-remodeling factor, it slides nucleosomes along DNA; nucleosome sliding requires ATP. Acts as a transcription repressor by remodeling chromatin structure and recruiting histone H1 to target genes. Suppresses p53/TP53-mediated apoptosis by recruiting histone H1 and preventing p53/TP53 transactivation activity. Acts as a negative regulator of Wnt signaling pathway by regulating beta-catenin (CTNNB1) activity. Negatively regulates CTNNB1-targeted gene expression by being recruited specifically to the promoter regions of several CTNNB1 responsive genes. Involved in both enhancer blocking and epigenetic remodeling at chromatin boundary via its interaction with CTCF. Acts as a suppressor of STAT3 activity by suppressing the LIF-induced STAT3 transcriptional activity. Also acts as a transcription activator via its interaction with ZNF143 by participating in efficient U6 RNA polymerase III transcription. Regulates alternative splicing of a core group of genes involved in neuronal differentiation, cell cycle and DNA repair. Enables H3K36me3-coupled transcription elongation and co-transcriptional RNA processing likely via interaction with HNRNPL. The polypeptide is Chromodomain-helicase-DNA-binding protein 8 (Rattus norvegicus (Rat)).